The primary structure comprises 217 residues: Large ribosomal subunit protein uL1 (217 aa).

This sequence belongs to the universal ribosomal protein uL1 family.

This Eremothecium gossypii (strain ATCC 10895 / CBS 109.51 / FGSC 9923 / NRRL Y-1056) (Yeast) protein is Large ribosomal subunit protein uL1 (RPL10A).